The sequence spans 391 residues: MLPVTSRRHFTMSLYMLRSSSPHINHHSFLLPSFVSSKFKHHTLSPPPSPPPPPPMAACIDTCRTGKPQISPRDSSKHHDDESGFRYMNYFRYPDRSSFNGTQTKTLHTRPLLEDLDRDAEVDDVWAKIREEAKSDIAKEPIVSAYYHASIVSQRSLEAALANTLSVKLSNLNLPSNTLFDLFSGVLQGNPDIVESVKLDLLAVKERDPACISYVHCFLHFKGFLACQAHRIAHELWTQDRKILALLIQNRVSEAFAVDFHPGAKIGTGILLDHATAIVIGETAVVGNNVSILHNVTLGGTGKQCGDRHPKIGDGVLIGAGTCILGNITIGEGAKIGAGSVVLKDVPPRTTAVGNPARLLGGKDNPKTHDKIPGLTMDQTSHISEWSDYVI.

Disordered stretches follow at residues 40-82 and 353-375; these read KHHT…HDDE and VGNPARLLGGKDNPKTHDKIPGL. Residues 45-56 show a composition bias toward pro residues; sequence SPPPSPPPPPPM.

This sequence belongs to the transferase hexapeptide repeat family. As to quaternary structure, homomultimer. Interacts with OASC. Component of the cysteine synthase complex (CSC) composed of two OAS-TL dimers and one SAT hexamer. As to expression, ubiquitous with higher levels in leaves and siliques. Localized in vascular tissues, particularly in phloem.

Its subcellular location is the mitochondrion. It carries out the reaction L-serine + acetyl-CoA = O-acetyl-L-serine + CoA. It participates in amino-acid biosynthesis; L-cysteine biosynthesis; L-cysteine from L-serine: step 1/2. The polypeptide is Serine acetyltransferase 3, mitochondrial (SAT3) (Arabidopsis thaliana (Mouse-ear cress)).